The following is a 125-amino-acid chain: Large ribosomal subunit protein uL22c (125 aa).

This sequence belongs to the universal ribosomal protein uL22 family. Part of the 50S ribosomal subunit.

The protein localises to the plastid. It localises to the chloroplast. This protein binds specifically to 23S rRNA. Its function is as follows. The globular domain of the protein is located near the polypeptide exit tunnel on the outside of the subunit, while an extended beta-hairpin is found that lines the wall of the exit tunnel in the center of the 70S ribosome. The polypeptide is Large ribosomal subunit protein uL22c (rpl22) (Huperzia lucidula (Shining clubmoss)).